The chain runs to 758 residues: MDVNPTLLFLKIPAQNAISTTFPYTGDPPYSHGTGTGYTMDTVNRTHQYSEKGKWTTNTETGAPQLNPIDGPLPEDNEPSGYAQTDCVLEAMAFLEESHPGIFENSCLETMEVVQQTRVDRLTQGRQTYDWTLNRNQPAATALANTIEVFRSNGLTANESGRLIDFLKDVMESMDKEEIEITTHFQRKRRVRDNMTKKMVTQRTIGKKKQRVNKRSYLIRALTLNTMTKDAERGKLKRRAIATPGMQIRGFVYFVETLARSICEKLEQSGLPVGGNEKKAKLANVVRKMMTNSQDTELSFTITGDNTKWNENQNPRMFLAMITYITKNQPEWFRNILSIAPIMFSNKMARLGKGYMFESKRMKLRTQIPAEMLASIDLKYFNESTRKKIEKIRPLLIDGTASLSPGMMMGMFNMLSTVLGVSILNLGQKKYTKTTYWWDGLQSSDDFALIVNAPNHEGIQAGVDRFYRTCKLVGINMSKKKSYINRTGTFEFTSFFYRYGFVANFSMELPSFGVSGINESADMSIGVTVIKNNMINNDLGPATAQMALQLFIKDYRYTYRCHRGDTQIQTRRSFELKKLWEQTRSKAGLLVSDGGPNLYNIRNLHIPEVCLKWELMDEDYQGRLCNPLNPFVSHKEIESVNNAVVMPAHGPAKSMEYDAVATTHSWIPKRNRSILNTSQRGILEDEQMYQKCCNLFEKFFPSSSYRRPVGISSMVEAMVSRARIDARIDFESGRIKKEEFSEIMKICSTIEELRRQKQ.

A disordered region spans residues 50-76; the sequence is SEKGKWTTNTETGAPQLNPIDGPLPED. The segment covering 55–64 has biased composition (polar residues); it reads WTTNTETGAP. Short sequence motifs (nuclear localization signal) lie at residues 187-195 and 203-216; these read RKRRVRDNM and RTIG…NKRS. Positions 249-256 are promoter-binding site; sequence RGFVYFVE. One can recognise a RdRp catalytic domain in the interval 286 to 483; it reads VRKMMTNSQD…GINMSKKKSY (198 aa).

It belongs to the influenza viruses polymerase PB1 family. As to quaternary structure, influenza RNA polymerase is composed of three subunits: PB1, PB2 and PA. Interacts (via N-terminus) with PA (via C-terminus). Interacts (via C-terminus) with PB2 (via N-terminus); this interaction is essential for transcription initiation. Post-translationally, phosphorylated by host PRKCA.

The protein localises to the host nucleus. It is found in the host cytoplasm. The enzyme catalyses RNA(n) + a ribonucleoside 5'-triphosphate = RNA(n+1) + diphosphate. RNA-dependent RNA polymerase which is responsible for replication and transcription of virus RNA segments. The transcription of viral mRNAs occurs by a unique mechanism called cap-snatching. 5' methylated caps of cellular mRNAs are cleaved after 10-13 nucleotides by PA. In turn, these short capped RNAs are used as primers by PB1 for transcription of viral mRNAs. During virus replication, PB1 initiates RNA synthesis and copy vRNA into complementary RNA (cRNA) which in turn serves as a template for the production of more vRNAs. The polypeptide is RNA-directed RNA polymerase catalytic subunit (Aves (whales)).